We begin with the raw amino-acid sequence, 89 residues long: Small ribosomal subunit protein uS14A (89 aa).

This sequence belongs to the universal ribosomal protein uS14 family. Part of the 30S ribosomal subunit. Contacts proteins S3 and S10.

In terms of biological role, binds 16S rRNA, required for the assembly of 30S particles and may also be responsible for determining the conformation of the 16S rRNA at the A site. The polypeptide is Small ribosomal subunit protein uS14A (Pediococcus pentosaceus (strain ATCC 25745 / CCUG 21536 / LMG 10740 / 183-1w)).